The primary structure comprises 301 residues: Phosphate transport system permease protein PstA 2 (301 aa).

The next 6 membrane-spanning stretches (helical) occupy residues 36 to 56, 83 to 103, 127 to 147, 149 to 169, 209 to 229, and 274 to 294; these read ACVC…IGVV, IIGT…VSVL, LSGI…VVYF, WGFS…PYIA, GIVT…APLL, and ALLL…INWL. An ABC transmembrane type-1 domain is found at 83 to 288; it reads IIGTAVLAIG…VFLLLLIFIG (206 aa).

Belongs to the binding-protein-dependent transport system permease family. CysTW subfamily.

Its subcellular location is the cell membrane. Its function is as follows. Part of the binding-protein-dependent transport system for phosphate; probably responsible for the translocation of the substrate across the membrane. The sequence is that of Phosphate transport system permease protein PstA 2 (pstA2) from Mycobacterium bovis (strain ATCC BAA-935 / AF2122/97).